The following is a 645-amino-acid chain: MKRSFIFAPGMLALSISAISNAHAYNNLYVFGDSLSDGGNNGRYTVDGINGTESKLYNDFIAQQLGIELVNSKKGGTNYAAGGATAVADLNNKHNTQDQVMGYLASHSNRADHNGMYVHWIGGNDVDAALRNPADAQKIITESAMAASSQVHALLNAGAGLVIVPTVPDVGMTPKIMEFVLSKGGATSKDLAKIHAVVNGYPTIDKDTRLQVIHGVFKQIGSDVSGGDAKKAEETTKQLIDGYNELSSNASKLVDNYNQLEDMALSQENGNIVRVDVNALLHEVIANPLRYGFLNTIGYACAQGVNAGSCRSKDTGFDASKPFLFADDFHPTPEAHHIVSQYTVSVLNAPYRVMLLTNANNVPVKGALASLDGRLQQLRNVDNEQGKLGVFGGYSGNHSHTLTLGSDYQIMDNILLGGMISRYQDNSSPADNFHYDGRGYVFTAYGLWRYYDKGWISGDLHYLDMKYEDITRGIVLNDWLRKENASTSGHQWGGRITAGWDIPLTSAVTTSPIIQYAWDKSYVKGYRESGNNSTAMHFGEQRYDSQVGTLGWRLDTNFGYFNPYAEVRFNHQFGDKRYQIRSAINSTQTSFVSESQKQDTHWREYTIGMNAVITKDWGAFASISRNDGDVQNHTYSFSLGVNASF.

The N-terminal stretch at 1–24 (MKRSFIFAPGMLALSISAISNAHA) is a signal peptide. Residue Ser-34 is the Nucleophile of the active site. Residues Asp-327 and His-330 contribute to the active site. In terms of domain architecture, Autotransporter spans 383–645 (NEQGKLGVFG…SFSLGVNASF (263 aa)).

It belongs to the 'GDSL' lipolytic enzyme family.

It is found in the secreted. The enzyme catalyses a triacylglycerol + H2O = a diacylglycerol + a fatty acid + H(+). The polypeptide is Lipase 1 (lip-1) (Photorhabdus luminescens (Xenorhabdus luminescens)).